We begin with the raw amino-acid sequence, 664 residues long: Transketolase 1 (664 aa).

Position 26 (His26) interacts with substrate. Residues His66 and 114–116 contribute to the thiamine diphosphate site; that span reads GPL. Position 155 (Asp155) interacts with Mg(2+). 2 residues coordinate thiamine diphosphate: Gly156 and Asn185. The Mg(2+) site is built by Asn185 and Ile187. The substrate site is built by His260, Arg357, and Ser384. A thiamine diphosphate-binding site is contributed by His260. The active-site Proton donor is the Glu411. Phe437 is a thiamine diphosphate binding site. 3 residues coordinate substrate: His461, Asp469, and Arg520.

It belongs to the transketolase family. Homodimer. Requires Mg(2+) as cofactor. Ca(2+) serves as cofactor. Mn(2+) is required as a cofactor. It depends on Co(2+) as a cofactor. The cofactor is thiamine diphosphate.

The enzyme catalyses D-sedoheptulose 7-phosphate + D-glyceraldehyde 3-phosphate = aldehydo-D-ribose 5-phosphate + D-xylulose 5-phosphate. Catalyzes the transfer of a two-carbon ketol group from a ketose donor to an aldose acceptor, via a covalent intermediate with the cofactor thiamine pyrophosphate. In Vibrio parahaemolyticus serotype O3:K6 (strain RIMD 2210633), this protein is Transketolase 1 (tkt1).